We begin with the raw amino-acid sequence, 346 residues long: Tetraacyldisaccharide 4'-kinase (346 aa).

Residue 54–61 participates in ATP binding; it reads TVGGAGKT.

It belongs to the LpxK family.

The catalysed reaction is a lipid A disaccharide + ATP = a lipid IVA + ADP + H(+). The protein operates within glycolipid biosynthesis; lipid IV(A) biosynthesis; lipid IV(A) from (3R)-3-hydroxytetradecanoyl-[acyl-carrier-protein] and UDP-N-acetyl-alpha-D-glucosamine: step 6/6. Transfers the gamma-phosphate of ATP to the 4'-position of a tetraacyldisaccharide 1-phosphate intermediate (termed DS-1-P) to form tetraacyldisaccharide 1,4'-bis-phosphate (lipid IVA). The sequence is that of Tetraacyldisaccharide 4'-kinase from Rhizobium etli (strain ATCC 51251 / DSM 11541 / JCM 21823 / NBRC 15573 / CFN 42).